A 213-amino-acid chain; its full sequence is Ribonuclease HII (213 aa).

Residues G18 to R213 form the RNase H type-2 domain. Residues D24, E25, and D116 each contribute to the a divalent metal cation site.

Belongs to the RNase HII family. Mn(2+) serves as cofactor. It depends on Mg(2+) as a cofactor.

It localises to the cytoplasm. It catalyses the reaction Endonucleolytic cleavage to 5'-phosphomonoester.. Functionally, endonuclease that specifically degrades the RNA of RNA-DNA hybrids. This is Ribonuclease HII from Shewanella woodyi (strain ATCC 51908 / MS32).